Here is a 113-residue protein sequence, read N- to C-terminus: Colicin-E1 immunity protein (113 aa).

In terms of biological role, this protein is able to protect a cell, which harbors the plasmid ColE1 encoding colicin E1, against colicin E1. In Escherichia coli, this protein is Colicin-E1 immunity protein (imm).